Here is a 242-residue protein sequence, read N- to C-terminus: Myogenic factor 6 (242 aa).

The segment at G30 to L63 is disordered. In terms of domain architecture, bHLH spans D93–L144. Residues A190–S210 form a disordered region.

In terms of assembly, efficient DNA binding requires dimerization with another bHLH protein. Skeletal muscle.

It localises to the nucleus. Its function is as follows. Involved in muscle differentiation (myogenic factor). Induces fibroblasts to differentiate into myoblasts. Probable sequence specific DNA-binding protein. This is Myogenic factor 6 (MYF6) from Gallus gallus (Chicken).